The following is a 2335-amino-acid chain: Pre-mRNA-processing-splicing factor 8 (2335 aa).

Ala2 bears the N-acetylalanine mark. The interval Thr812–Leu1303 is reverse transcriptase homology domain. 2 positions are modified to phosphoserine: Ser859 and Ser1358. Residues Asn1304–Phe1577 are linker. At Lys1425 the chain carries N6,N6-dimethyllysine. Lys1463 is modified (N6-acetyllysine). The important for branch point selection stretch occupies residues Met1513–Leu1526. Residues Leu1581 to Gln1752 form a restriction endonuclease homology domain region. The involved in interaction with pre-mRNA 5' splice site stretch occupies residues Gly1669–Lys2034. The RNase H homology domain stretch occupies residues Asn1767–Ser2020. Residues Thr2103–Gly2234 form the MPN domain. Residues Pro2301–Ala2335 form a required for interaction with EFTUD2 and SNRNP200 region.

In terms of assembly, part of the U5 snRNP complex. Component of the U4/U6-U5 tri-snRNP complex composed of the U4, U6 and U5 snRNAs and at least PRPF3, PRPF4, PRPF6, PRPF8, PRPF31, SNRNP200, TXNL4A, SNRNP40, DDX23, CD2BP2, PPIH, SNU13, EFTUD2, SART1 and USP39. Component of the U5.U4atac/U6atac snRNP complexes in U12-dependent spliceosomes. Within the minor spliceosome, which acts on U12-type introns, interacts with PPIL2 and RBM48. Core component of U2-type precatalytic, catalytic and postcatalytic spliceosomal complexes. Found in a mRNA splicing-dependent exon junction complex (EJC) with SRRM1. Interacts with U5 snRNP proteins SNRP116 and SNRNP40. Interacts with EFTUD2. Interacts (via the MPN (JAB/Mov34) domain) with PRPF3 ('Lys-63'-linked polyubiquitinated); may stabilize the U4/U6-U5 tri-snRNP complex. Interacts (via RNase H homology domain) with AAR2. Interacts with RPAP3 and URI1 in a ZNHIT2-dependent manner. Interacts with C9orf78. Interacts with SNRNP200; the interaction is direct. Interacts with TSSC4; the interaction is direct. Widely expressed.

It localises to the nucleus. It is found in the nucleus speckle. Plays a role in pre-mRNA splicing as core component of precatalytic, catalytic and postcatalytic spliceosomal complexes, both of the predominant U2-type spliceosome and the minor U12-type spliceosome. Functions as a scaffold that mediates the ordered assembly of spliceosomal proteins and snRNAs. Required for the assembly of the U4/U6-U5 tri-snRNP complex, a building block of the spliceosome. Functions as a scaffold that positions spliceosomal U2, U5 and U6 snRNAs at splice sites on pre-mRNA substrates, so that splicing can occur. Interacts with both the 5' and the 3' splice site. In Homo sapiens (Human), this protein is Pre-mRNA-processing-splicing factor 8 (PRPF8).